The primary structure comprises 316 residues: Olfactory receptor 2AG1 (316 aa).

Residues 1 to 25 (MELWNFTLGSGFILVGILNDSGSPE) lie on the Extracellular side of the membrane. N-linked (GlcNAc...) asparagine glycans are attached at residues N5 and N19. A helical transmembrane segment spans residues 26–49 (LLCATITILYLLALISNGLLLLAI). The Cytoplasmic portion of the chain corresponds to 50–57 (TMEARLHM). The helical transmembrane segment at 58-79 (PMYLLLGQLSLMDLLFTSVVTP) threads the bilayer. Over 80–100 (KALADFLRRENTISFGGCALQ) the chain is Extracellular. C97 and C189 are oxidised to a cystine. The helical transmembrane segment at 101–120 (MFLALTMGGAEDLLLAFMAY) threads the bilayer. The Cytoplasmic segment spans residues 121–139 (DRYVAICHPLTYMTLMSSR). A helical membrane pass occupies residues 140 to 158 (ACWLMVATSWILASLSALI). Topologically, residues 159-195 (YTVYTMHYPFCRAQEIRHLLCEIPHLLKVACADTSRY) are extracellular. The helical transmembrane segment at 196-219 (ELMVYVMGVTFLIPSLAAILASYT) threads the bilayer. At 220–236 (QILLTVLHMPSNEGRKK) the chain is on the cytoplasmic side. The helical transmembrane segment at 237–259 (ALVTCSSHLTVVGMFYGAATFMY) threads the bilayer. The Extracellular portion of the chain corresponds to 260-272 (VLPSSFHSTRQDN). The chain crosses the membrane as a helical span at residues 273-292 (IISVFYTIVTPALNPLIYSL). Over 293–316 (RNKEVMRALRRVLGKYMLPAHSTL) the chain is Cytoplasmic.

Belongs to the G-protein coupled receptor 1 family.

It localises to the cell membrane. In terms of biological role, odorant receptor. This Homo sapiens (Human) protein is Olfactory receptor 2AG1 (OR2AG1).